The sequence spans 377 residues: F-box protein At2g05970 (377 aa).

The 48-residue stretch at 8 to 55 (ASWSELCPDVLRCVFELLSFSDLNRTRSVCSSWHSASRHCVPTQNQIP) folds into the F-box domain.

This chain is F-box protein At2g05970, found in Arabidopsis thaliana (Mouse-ear cress).